We begin with the raw amino-acid sequence, 101 residues long: Enhancer of yellow 2 transcription factor (101 aa).

This sequence belongs to the ENY2 family. Component of the nuclear pore complex (NPC)-associated AMEX complex (anchoring and mRNA export complex), composed of at least e(y)2 and xmas-2. Component of the SAGA transcription coactivator-HAT complexes, at least composed of Ada2b, e(y)2, Pcaf/Gcn5, Taf10 and Nipped-A/Trrap. Within the SAGA complex, e(y)2, Sgf11, and not/nonstop form an additional subcomplex of SAGA called the DUB module (deubiquitination module). Component of the THO complex, composed of at least e(y)2, HPR1, THO2, THOC5, THOC6 and THOC7. Interacts with e(y)1. Interacts with su(Hw) (via zinc fingers). Interacts with xmas-2; required for localization to the nuclear periphery. Interacts with the nuclear pore complex (NPC).

The protein resides in the nucleus. It localises to the nucleoplasm. The protein localises to the cytoplasm. Its function is as follows. Involved in mRNA export coupled transcription activation by association with both the AMEX and the SAGA complexes. The SAGA complex is a multiprotein complex that activates transcription by remodeling chromatin and mediating histone acetylation and deubiquitination. Within the SAGA complex, participates in a subcomplex that specifically deubiquitinates histone H2B. The SAGA complex is recruited to specific gene promoters by activators, where it is required for transcription. Required for nuclear receptor-mediated transactivation. Involved in transcription elongation by recruiting the THO complex onto nascent mRNA. The AMEX complex functions in docking export-competent ribonucleoprotein particles (mRNPs) to the nuclear entrance of the nuclear pore complex (nuclear basket). AMEX participates in mRNA export and accurate chromatin positioning in the nucleus by tethering genes to the nuclear periphery. This Drosophila simulans (Fruit fly) protein is Enhancer of yellow 2 transcription factor.